We begin with the raw amino-acid sequence, 2863 residues long: Lipopolysaccharide-responsive and beige-like anchor protein (2863 aa).

3 disordered regions span residues 1-35 (MASEDNRVPSPPPTGDDGGGGGREETPTEGGALSL), 969-1005 (VGSQQPDTKDSPVCPHFTTNGNENSSIEKTSSLESAS), and 1018-1039 (EMKAEQENQELPDEGTLEETLT). Position 2 is an N-acetylalanine (Ala-2). Residues Ser-10, Ser-979, and Ser-1003 each carry the phosphoserine modification. Residues 985–1005 (FTTNGNENSSIEKTSSLESAS) show a composition bias toward polar residues. Positions 1006–1053 (NIELQTTNTSYEEMKAEQENQELPDEGTLEETLTNETRNADDLEVSSD) form a coiled coil. Over residues 1024–1034 (ENQELPDEGTL) the composition is skewed to acidic residues. Ser-1100, Ser-1135, and Ser-1139 each carry phosphoserine. Positions 1161-1176 (PVTEKQTDTETQDSKD) are enriched in basic and acidic residues. The tract at residues 1161–1193 (PVTEKQTDTETQDSKDSGIQTMTASGSSAMSPE) is disordered. The span at 1177-1193 (SGIQTMTASGSSAMSPE) shows a compositional bias: polar residues. Residues Ser-1233, Ser-1247, and Ser-1261 each carry the phosphoserine modification. A WD 1 repeat occupies 1301 to 1343 (STVFRIPEFNWSQMHQRLLTDLLFSIETDIQMWRSHSTKTVMD). A phosphoserine mark is found at Ser-1488 and Ser-1498. The helical transmembrane segment at 1531–1548 (FLALAVVYFISVLMVSKY) threads the bilayer. The segment covering 1586-1599 (LTTASVEESESTSS) has biased composition (low complexity). Disordered regions lie at residues 1586–1668 (LTTA…KATP) and 1759–1789 (QASDMGGESPGSRSSNAKLPSVPTVDSVSQD). Ser-1605 is subject to Phosphoserine. A compositionally biased stretch (basic and acidic residues) spans 1650–1664 (KSPETKNDRGNDLDT). Residues Ser-1767, Ser-1770, and Ser-2064 each carry the phosphoserine modification. Over residues 1769-1789 (GSRSSNAKLPSVPTVDSVSQD) the composition is skewed to polar residues. Positions 2073–2181 (NLAGPVSLST…TVKKVVNYLP (109 aa)) constitute a BEACH-type PH domain. The 290-residue stretch at 2200-2489 (ASPRQLFKAS…QLLIEPHPPR (290 aa)) folds into the BEACH domain. Ser-2496 carries the phosphoserine modification. 5 WD repeats span residues 2591–2633 (DQSI…LIQV), 2636–2679 (GHWD…SGIG), 2695–2735 (GHDY…RTLE), 2777–2816 (ETDDNIRAIQLSRDGQYLLTGGDRGVVVVRQVSDLKQLFA), and 2819–2858 (GCDAGIRAMALSYDQRCIISGMASGSIVLFYNDFNRWHHE).

In terms of assembly, interacts with TOM1 and TOLLIP. Ubiquitous.

It is found in the cell membrane. The protein localises to the endoplasmic reticulum membrane. It localises to the golgi apparatus. Its subcellular location is the trans-Golgi network membrane. The protein resides in the lysosome membrane. Functionally, involved in coupling signal transduction and vesicle trafficking to enable polarized secretion and/or membrane deposition of immune effector molecules. Involved in phagophore growth during mitophagy by regulating ATG9A trafficking to mitochondria. This chain is Lipopolysaccharide-responsive and beige-like anchor protein, found in Homo sapiens (Human).